The chain runs to 148 residues: Transcription antitermination protein NusB (148 aa).

It belongs to the NusB family.

Functionally, involved in transcription antitermination. Required for transcription of ribosomal RNA (rRNA) genes. Binds specifically to the boxA antiterminator sequence of the ribosomal RNA (rrn) operons. The sequence is that of Transcription antitermination protein NusB from Aquifex aeolicus (strain VF5).